A 592-amino-acid chain; its full sequence is MRSHYCGDVNKSHVGQEVTLVGWVNRSRDLGGVVFLDLRDREGLIQVVYDPDLPEVFNVASTLRAEFCVQVKGLVRARPDSQVNGQMKTGEIEVLGQALTIINAADPLPLSMDNYQNNSEEQRLKYRYLDLRRPEMAQRLIFRAKVTSSVRRFLDSNGFLDIETPILTKATPEGARDYLVPSRTYKGQFFALPQSPQLFKQLLMMSGFDRYYQIVKCFRDEDLRADRQPEFTQIDIETSFMSSEQVMAKTEEMMRGLFLEMLNVDLGEFPRMTYNEAMRRFGSDKPDLRNPLELVDIADLLKEVEFAVFSGPANDEEGRVAALRIPGGAALSRKQIDDYTKFVGIYGAKGLAWMKINDLSLGLEGIQSPVLKFLNDSIVNEIVSRTGAQTGDIILFGADQATVVAESMGALRLKAGEDFSLLQGEWRPLWVVDFPMFEKINGNFHAVHHPFTAPRGVTAAELEANPANRVSDAYDMVLNGCELGGGSVRIHNQEMQSAVFRILGITDEEAKEKFGFLLEALRYGTPPHAGLAFGLDRIIMLMTGASSIRDVMAFPKTTTAACPLTNAPGFANPQQLAELGIAVVEKAVKTED.

Glu173 serves as a coordination point for L-aspartate. The segment at 197 to 200 (QLFK) is aspartate. Arg219 contacts L-aspartate. ATP is bound by residues 219-221 (RDE) and Gln228. His448 contributes to the L-aspartate binding site. Glu482 is an ATP binding site. Position 489 (Arg489) interacts with L-aspartate. 534-537 (GLDR) contributes to the ATP binding site.

The protein belongs to the class-II aminoacyl-tRNA synthetase family. Type 1 subfamily. In terms of assembly, homodimer.

It localises to the cytoplasm. The catalysed reaction is tRNA(Asp) + L-aspartate + ATP = L-aspartyl-tRNA(Asp) + AMP + diphosphate. Functionally, catalyzes the attachment of L-aspartate to tRNA(Asp) in a two-step reaction: L-aspartate is first activated by ATP to form Asp-AMP and then transferred to the acceptor end of tRNA(Asp). This chain is Aspartate--tRNA ligase, found in Shewanella baltica (strain OS155 / ATCC BAA-1091).